A 560-amino-acid chain; its full sequence is Glycolate permease GlcA (560 aa).

Over 1 to 13 (MVTWTQMYMPMGG) the chain is Cytoplasmic. A helical membrane pass occupies residues 14-34 (LGLSALVALIPIIFFFVALAV). Over 35-41 (LRLKGHV) the chain is Periplasmic. A helical membrane pass occupies residues 42-62 (AGAITLILSILIAIFAFKMPI). Over 63–69 (DMAFAAA) the chain is Cytoplasmic. The helical transmembrane segment at 70–90 (GYGFIYGLWPIAWIIVAAVFL) threads the bilayer. The Periplasmic segment spans residues 91–130 (YKLTVASGQFDIIRSSVISITDDQRLQVLLIGFSFGALLE). A helical membrane pass occupies residues 131 to 151 (GAAGFGAPVAITGALLVGLGF). Over 152–158 (KPLYAAG) the chain is Cytoplasmic. The helical transmembrane segment at 159–179 (LCLIANTAPVAFGALGVPILV) threads the bilayer. At 180-199 (AGQVTGIDPFHIGAMAGRQL) the chain is on the periplasmic side. A helical transmembrane segment spans residues 200 to 220 (PFLSVLVPFWLVAMMDGWKGV). At 221–225 (KETWP) the chain is on the cytoplasmic side. Residues 226–246 (AALVAGGSFAVTQFFTSNYIG) form a helical membrane-spanning segment. Residues 247-248 (PE) are Periplasmic-facing. A helical membrane pass occupies residues 249–269 (LPDITSALVSIVSLALFLKVW). At 270 to 313 (RPKNTETAISMGQSAGAMVVNKPSSGGPVPSEYSLGQIIRAWSP) the chain is on the cytoplasmic side. Residues 314-334 (FLILTVLVTIWTMKPFKALFA) form a helical membrane-spanning segment. Topologically, residues 335–378 (PGGAFYSLVINFQIPHLHQQVLKAAPIVAQPTPMDAVFKFDPLS) are periplasmic. Residues 379-399 (AGGTAIFIAAIISIFILGVGI) form a helical membrane-spanning segment. Residues 400 to 408 (KKGIGVFAE) are Cytoplasmic-facing. Residues 409-429 (TLISLKWPILSIGMVLAFAFV) traverse the membrane as a helical segment. At 430-438 (TNYSGMSTT) the chain is on the periplasmic side. A helical transmembrane segment spans residues 439-459 (LALVLAGTGVMFPFFSPFLGW). Over 460-536 (LGVFLTGSDT…ELFRYTVKHS (77 aa)) the chain is Cytoplasmic. Residues 537-557 (LIFASVIGIITLLQAYVFTGM) form a helical membrane-spanning segment. The Periplasmic segment spans residues 558–560 (LVS).

Belongs to the lactate permease family.

The protein localises to the cell inner membrane. The enzyme catalyses glycolate(in) + H(+)(in) = glycolate(out) + H(+)(out). The catalysed reaction is (S)-lactate(in) + H(+)(in) = (S)-lactate(out) + H(+)(out). It carries out the reaction (R)-lactate(in) + H(+)(in) = (R)-lactate(out) + H(+)(out). Inhibited by the proton ionophore carbonyl cyanide m-chlorophenylhydrazone (CCCP). In terms of biological role, uptake of glycolate across the membrane. Can also transport L-lactate and D-lactate. Seems to be driven by a proton motive force. The polypeptide is Glycolate permease GlcA (Escherichia coli (strain K12)).